The primary structure comprises 632 residues: Chaperone protein HtpG (632 aa).

Positions 1–339 (MAHETMSFQA…SADLPLNVSR (339 aa)) are a; substrate-binding. Positions 340–559 (EILQESRDVK…DNDMSGYLQR (220 aa)) are b. The segment at 560–632 (MLKAAGQNAP…TNALLLSRAA (73 aa)) is c.

It belongs to the heat shock protein 90 family. Homodimer.

The protein localises to the cytoplasm. Functionally, molecular chaperone. Has ATPase activity. The sequence is that of Chaperone protein HtpG from Burkholderia cenocepacia (strain HI2424).